The primary structure comprises 233 residues: Riboflavin kinase (233 aa).

Positions 1–104 are H-T-H motif-like; sequence MVRDIKTFKF…YKKIFDDEGT (104 aa). Positions 105-233 are riboflavin kinase; that stretch reads IKIKGEVFSG…GDFVEVEVIL (129 aa). Position 114–119 (114–119) interacts with CDP; that stretch reads GVGEGR. Mg(2+) is bound by residues Thr143 and Asn145. FMN contacts are provided by Thr200 and Glu208. 213-216 is a CDP binding site; that stretch reads VKLR.

It belongs to the archaeal riboflavin kinase family. Requires Mg(2+) as cofactor.

The catalysed reaction is riboflavin + CTP = CDP + FMN + H(+). The protein operates within cofactor biosynthesis; FMN biosynthesis; FMN from riboflavin (CTP route): step 1/1. In terms of biological role, catalyzes the CTP-dependent phosphorylation of riboflavin (vitamin B2) to form flavin mononucleotide (FMN). The chain is Riboflavin kinase (ribK) from Archaeoglobus fulgidus (strain ATCC 49558 / DSM 4304 / JCM 9628 / NBRC 100126 / VC-16).